We begin with the raw amino-acid sequence, 260 residues long: CD40 ligand (260 aa).

The Cytoplasmic segment spans residues 1-22 (MIETYSQPSPRSVATGLPASMK). Residues 23 to 46 (IFMYLLTVFLITQMIGSVLFAVYL) form a helical; Signal-anchor for type II membrane protein membrane-spanning segment. Topologically, residues 47-260 (HRRLDKVEEE…GFSSFGLLKL (214 aa)) are extracellular. The 140-residue stretch at 121–260 (IAAHVVSEAN…GFSSFGLLKL (140 aa)) folds into the THD domain. A disulfide bridge connects residues Cys177 and Cys217. Asn239 carries N-linked (GlcNAc...) asparagine glycosylation.

The protein belongs to the tumor necrosis factor family. As to quaternary structure, homotrimer. Interacts with CD28. CD40 ligand, soluble form: Exists as either a monomer or a homotrimer. Forms a ternary complex between CD40 and integrins for CD40-CD40LG signaling. The soluble form derives from the membrane form by proteolytic processing. Specifically expressed on activated CD4+ T-lymphocytes.

The protein localises to the cell membrane. It localises to the cell surface. It is found in the secreted. Its function is as follows. Cytokine that acts as a ligand to CD40/TNFRSF5. Costimulates T-cell proliferation and cytokine production. Its cross-linking on T-cells generates a costimulatory signal which enhances the production of IL4 and IL10 in conjunction with the TCR/CD3 ligation and CD28 costimulation. Induces the activation of NF-kappa-B. Induces the activation of kinases MAPK8 and PAK2 in T-cells. Mediates B-cell proliferation in the absence of co-stimulus as well as IgE production in the presence of IL4. Involved in immunoglobulin class switching. In terms of biological role, acts as a ligand for integrins, specifically ITGA5:ITGB1 and ITGAV:ITGB3; both integrins and the CD40 receptor are required for activation of CD40-CD40LG signaling, which have cell-type dependent effects, such as B-cell activation, NF-kappa-B signaling and anti-apoptotic signaling. The polypeptide is CD40 ligand (Cd40lg) (Mus musculus (Mouse)).